Here is a 105-residue protein sequence, read N- to C-terminus: NADH-quinone oxidoreductase subunit K (105 aa).

3 consecutive transmembrane segments (helical) span residues 4–24 (LTHY…GVIV), 28–48 (IIVI…SLVA), and 66–86 (LSIF…ALIV).

This sequence belongs to the complex I subunit 4L family. In terms of assembly, NDH-1 is composed of 14 different subunits. Subunits NuoA, H, J, K, L, M, N constitute the membrane sector of the complex.

It localises to the cell inner membrane. The catalysed reaction is a quinone + NADH + 5 H(+)(in) = a quinol + NAD(+) + 4 H(+)(out). NDH-1 shuttles electrons from NADH, via FMN and iron-sulfur (Fe-S) centers, to quinones in the respiratory chain. The immediate electron acceptor for the enzyme in this species is believed to be ubiquinone. Couples the redox reaction to proton translocation (for every two electrons transferred, four hydrogen ions are translocated across the cytoplasmic membrane), and thus conserves the redox energy in a proton gradient. This is NADH-quinone oxidoreductase subunit K from Akkermansia muciniphila (strain ATCC BAA-835 / DSM 22959 / JCM 33894 / BCRC 81048 / CCUG 64013 / CIP 107961 / Muc).